We begin with the raw amino-acid sequence, 781 residues long: Putative UPF0313 protein YPO0674/y3502/YP_2990 (781 aa).

The 279-residue stretch at 368–646 (AYDMIRFSIN…KALLRYHDPA (279 aa)) folds into the Radical SAM core domain. [4Fe-4S] cluster is bound by residues Cys-382, Cys-386, and Cys-389. The interval 681–781 (REARRALRHH…AGSRGKNRQH (101 aa)) is disordered. Over residues 696 to 708 (KHTSITRQRQPSN) the composition is skewed to polar residues. Over residues 726–750 (TSSAHSTSANQSTSANQSTSAAHST) the composition is skewed to low complexity.

This sequence belongs to the UPF0313 family. [4Fe-4S] cluster is required as a cofactor.

This is Putative UPF0313 protein YPO0674/y3502/YP_2990 from Yersinia pestis.